We begin with the raw amino-acid sequence, 281 residues long: ATP synthase gamma chain (281 aa).

This sequence belongs to the ATPase gamma chain family. In terms of assembly, F-type ATPases have 2 components, CF(1) - the catalytic core - and CF(0) - the membrane proton channel. CF(1) has five subunits: alpha(3), beta(3), gamma(1), delta(1), epsilon(1). CF(0) has three main subunits: a, b and c.

The protein resides in the cell inner membrane. In terms of biological role, produces ATP from ADP in the presence of a proton gradient across the membrane. The gamma chain is believed to be important in regulating ATPase activity and the flow of protons through the CF(0) complex. This is ATP synthase gamma chain from Ehrlichia canis (strain Jake).